A 33-amino-acid chain; its full sequence is Brevinin-2Eb (33 aa).

Cys-27 and Cys-33 are oxidised to a cystine.

The protein belongs to the frog skin active peptide (FSAP) family. Brevinin subfamily. In terms of tissue distribution, expressed by the skin glands.

It is found in the secreted. Functionally, shows antibacterial activity against representative Gram-negative and Gram-positive bacterial species, and hemolytic activity. The polypeptide is Brevinin-2Eb (Pelophylax lessonae (Pool frog)).